Reading from the N-terminus, the 777-residue chain is Endonuclease MutS2 (777 aa).

328 to 335 (GPNTGGKT) is an ATP binding site. The region spanning 702–777 (LDLRGKRYEE…GSGCTIATLG (76 aa)) is the Smr domain.

Belongs to the DNA mismatch repair MutS family. MutS2 subfamily. As to quaternary structure, homodimer. Binds to stalled ribosomes, contacting rRNA.

In terms of biological role, endonuclease that is involved in the suppression of homologous recombination and thus may have a key role in the control of bacterial genetic diversity. Functionally, acts as a ribosome collision sensor, splitting the ribosome into its 2 subunits. Detects stalled/collided 70S ribosomes which it binds and splits by an ATP-hydrolysis driven conformational change. Acts upstream of the ribosome quality control system (RQC), a ribosome-associated complex that mediates the extraction of incompletely synthesized nascent chains from stalled ribosomes and their subsequent degradation. Probably generates substrates for RQC. This is Endonuclease MutS2 from Streptococcus uberis (strain ATCC BAA-854 / 0140J).